A 383-amino-acid chain; its full sequence is S-adenosylmethionine synthase (383 aa).

His-15 contributes to the ATP binding site. Mg(2+) is bound at residue Asp-17. Glu-43 lines the K(+) pocket. Glu-56 and Gln-99 together coordinate L-methionine. The interval 99–109 (QSPDINQGVDR) is flexible loop. ATP is bound by residues 164-166 (DAK), 230-231 (RF), Asp-239, 245-246 (RK), Ala-262, and Lys-266. Asp-239 provides a ligand contact to L-methionine. Position 270 (Lys-270) interacts with L-methionine.

This sequence belongs to the AdoMet synthase family. Homotetramer; dimer of dimers. Mg(2+) serves as cofactor. Requires K(+) as cofactor.

It is found in the cytoplasm. It carries out the reaction L-methionine + ATP + H2O = S-adenosyl-L-methionine + phosphate + diphosphate. Its pathway is amino-acid biosynthesis; S-adenosyl-L-methionine biosynthesis; S-adenosyl-L-methionine from L-methionine: step 1/1. Catalyzes the formation of S-adenosylmethionine (AdoMet) from methionine and ATP. The overall synthetic reaction is composed of two sequential steps, AdoMet formation and the subsequent tripolyphosphate hydrolysis which occurs prior to release of AdoMet from the enzyme. This chain is S-adenosylmethionine synthase, found in Shewanella sp. (strain W3-18-1).